A 291-amino-acid polypeptide reads, in one-letter code: RPE-retinal G protein-coupled receptor (291 aa).

Residues 1-15 (MAESGTLPTGFGELE) are Extracellular-facing. A helical transmembrane segment spans residues 16–36 (VLAVGTVLLVEALSGLSLNIL). Residues 37–52 (TILSFCKTPELRTPSH) lie on the Cytoplasmic side of the membrane. Residues 53 to 73 (LLVLSLALADSGISLNALVAA) form a helical membrane-spanning segment. The Extracellular segment spans residues 74 to 91 (TSSLLRRWPYGSEGCQAH). The cysteines at positions 88 and 162 are disulfide-linked. A helical transmembrane segment spans residues 92 to 112 (GFQGFVTALASICSSAAVAWG). Topologically, residues 113–130 (RYHHFCTRSRLDWNTAVS) are cytoplasmic. Residues 131–151 (LVFFVWLSSAFWAALPLLGWG) form a helical membrane-spanning segment. At 152–175 (HYDYEPLGTCCTLDYSRGDRNFTS) the chain is on the extracellular side. Asn172 carries N-linked (GlcNAc...) asparagine glycosylation. A helical transmembrane segment spans residues 176-196 (FLFTMAFFNFLLPLFITVVSY). Over 197–219 (RLMEQKLGKTSRPPVNTVLPART) the chain is Cytoplasmic. A helical transmembrane segment spans residues 220-240 (LLLGWGPYALLYLYATIADAT). Over 241-247 (SISPKLQ) the chain is Extracellular. Residues 248 to 268 (MVPALIAKAVPTVNAMNYALG) form a helical membrane-spanning segment. Residue Lys255 is modified to N6-(retinylidene)lysine. At 269-291 (SEMVHRGIWQCLSPQRREHSREQ) the chain is on the cytoplasmic side.

This sequence belongs to the G-protein coupled receptor 1 family. Opsin subfamily. Post-translationally, covalently binds all-trans- and 11-cis-retinal. In terms of tissue distribution, preferentially expressed at high levels in the retinal pigment epithelium (RPE) and Mueller cells of the neural retina.

It localises to the membrane. Functionally, receptor for all-trans- and 11-cis-retinal. Binds preferentially to the former and may catalyze the isomerization of the chromophore by a retinochrome-like mechanism. This chain is RPE-retinal G protein-coupled receptor (RGR), found in Bos taurus (Bovine).